We begin with the raw amino-acid sequence, 385 residues long: 1-deoxy-D-xylulose 5-phosphate reductoisomerase (385 aa).

Residues Thr-10, Gly-11, Ser-12, Ile-13, and Asn-124 each contribute to the NADPH site. 1-deoxy-D-xylulose 5-phosphate is bound at residue Lys-125. Glu-126 serves as a coordination point for NADPH. Residue Asp-150 participates in Mn(2+) binding. Residues Ser-151, Glu-152, Ser-176, and His-199 each coordinate 1-deoxy-D-xylulose 5-phosphate. Mn(2+) is bound at residue Glu-152. NADPH is bound at residue Gly-205. The 1-deoxy-D-xylulose 5-phosphate site is built by Ser-212, Asn-217, Lys-218, and Glu-221. Glu-221 serves as a coordination point for Mn(2+).

Belongs to the DXR family. The cofactor is Mg(2+). Requires Mn(2+) as cofactor.

The enzyme catalyses 2-C-methyl-D-erythritol 4-phosphate + NADP(+) = 1-deoxy-D-xylulose 5-phosphate + NADPH + H(+). The protein operates within isoprenoid biosynthesis; isopentenyl diphosphate biosynthesis via DXP pathway; isopentenyl diphosphate from 1-deoxy-D-xylulose 5-phosphate: step 1/6. Catalyzes the NADPH-dependent rearrangement and reduction of 1-deoxy-D-xylulose-5-phosphate (DXP) to 2-C-methyl-D-erythritol 4-phosphate (MEP). The chain is 1-deoxy-D-xylulose 5-phosphate reductoisomerase from Clostridium kluyveri (strain NBRC 12016).